The chain runs to 547 residues: MAAKEIKFGRTAREKMLHGVDILADAVKVTLGPKGRNVIIDKSFGAPRITKDGVSVAKEIELEDKFENMGAQMVREVASKTNDIAGDGTTTATVLAQAIVREGNKAVAAGMNPMDLKRGIDLAVAEVVKDLQAKAKKISTSEEVAQVGTISANGDTQVGKDIAEAMQKVGNEGVITVEEAKTAETELEVVEGMQFDRGYLSPYFVTNPEKMVADLEDAYVLLHEKKLSNLQAMLPVLEAVVQTGKPLVIIAEDVEGEALATLVVNKLRGGLKIAAVKAPGFGDRRKAMLEDIAILTGGTVISEDLGIKLETVTLDMLGRAKKISITKENTTIVDGAGQKSDIEGRVAQIKAQIEETSSDYDREKLQERLAKLAGGVAVIRVGGSTEIEVKERKDRIDDALNATRAAVQEGIVPGGGTALLRSSTKITVKGVNDDQEAGINIVRRALQSLVRQIATNAGDEASIIVGKILDKDNDNYGYNAQTGEFGDMIAMGIVDPVKVVRTALQNAASVASLLITTEAMIAELPKKDSAGGGMPDMGGMGGMGGMM.

Residues 30–33, lysine 51, 87–91, glycine 415, and aspartate 495 each bind ATP; these read TLGP and DGTTT.

It belongs to the chaperonin (HSP60) family. In terms of assembly, forms a cylinder of 14 subunits composed of two heptameric rings stacked back-to-back. Interacts with the co-chaperonin GroES.

The protein localises to the cytoplasm. The enzyme catalyses ATP + H2O + a folded polypeptide = ADP + phosphate + an unfolded polypeptide.. In terms of biological role, together with its co-chaperonin GroES, plays an essential role in assisting protein folding. The GroEL-GroES system forms a nano-cage that allows encapsulation of the non-native substrate proteins and provides a physical environment optimized to promote and accelerate protein folding. The protein is Chaperonin GroEL of Allorhizobium ampelinum (strain ATCC BAA-846 / DSM 112012 / S4) (Agrobacterium vitis (strain S4)).